The following is a 344-amino-acid chain: MRWAVLGGGHWGTALAVYLLRQRHMVQLWGRRAERLPCQPGRTDLFPVFPECARPEGLHCTVDLAAAVQGGEGIVLAVPSHALRGLLTHLLPCLPSTALFVLASKGLEVPSALRLDQVLREILPEAPLVVLSGPSFAHDLMLGKPLAMTAASTDPTYAQRVAEAFGSAQMRVYTSDDVAGVCLGGAIKNVLAIAAGISDGLGNGDSARAALITRGMAELHRLGTALGGRTETFMGLAGAGDLILTSCSDLSRNRRVGLGLGSGLSLEAVLRGIGEEAEGVRTAQALFQLAQSLGVDMPITEQVYRVLFEGAAPRAASDELMRRALRSELHVSDDGTPGGAARTE.

Residues Trp11, Arg31, Arg32, and Lys105 each contribute to the NADPH site. Sn-glycerol 3-phosphate-binding residues include Lys105, Gly133, and Ser135. Ala137 is an NADPH binding site. Sn-glycerol 3-phosphate-binding residues include Lys188, Asp241, Ser251, Arg252, and Asn253. Lys188 (proton acceptor) is an active-site residue. NADPH is bound at residue Arg252. Glu278 contacts NADPH.

The protein belongs to the NAD-dependent glycerol-3-phosphate dehydrogenase family.

It localises to the cytoplasm. The enzyme catalyses sn-glycerol 3-phosphate + NAD(+) = dihydroxyacetone phosphate + NADH + H(+). The catalysed reaction is sn-glycerol 3-phosphate + NADP(+) = dihydroxyacetone phosphate + NADPH + H(+). It participates in membrane lipid metabolism; glycerophospholipid metabolism. Functionally, catalyzes the reduction of the glycolytic intermediate dihydroxyacetone phosphate (DHAP) to sn-glycerol 3-phosphate (G3P), the key precursor for phospholipid synthesis. The sequence is that of Glycerol-3-phosphate dehydrogenase [NAD(P)+] from Acidithiobacillus ferrooxidans (strain ATCC 23270 / DSM 14882 / CIP 104768 / NCIMB 8455) (Ferrobacillus ferrooxidans (strain ATCC 23270)).